Consider the following 261-residue polypeptide: 3-hydroxyacyl-CoA dehydrogenase type-2 (261 aa).

Ala2 bears the N-acetylalanine mark. The NAD(+) site is built by Ser20 and Asp41. An N6-acetyllysine; alternate modification is found at Lys53. At Lys53 the chain carries N6-succinyllysine; alternate. Val65 contributes to the NAD(+) binding site. Lys69 carries the post-translational modification N6-acetyllysine. An NAD(+)-binding site is contributed by Cys91. N6-acetyllysine occurs at positions 99 and 105. The residue at position 107 (Lys107) is an N6-acetyllysine; alternate. An N6-succinyllysine; alternate modification is found at Lys107. Residue Ser155 coordinates substrate. NAD(+)-binding residues include Tyr168, Lys172, Phe201, and Thr203. Residue Tyr168 is the Proton acceptor of the active site. Position 212 is an N6-acetyllysine; alternate (Lys212). The residue at position 212 (Lys212) is an N6-succinyllysine; alternate.

It belongs to the short-chain dehydrogenases/reductases (SDR) family. Homotetramer. Component of mitochondrial ribonuclease P, a complex composed of TRMT10C/MRPP1, HSD17B10/MRPP2 and PRORP/MRPP3. Interacts with TRMT10C/MRPP1; forming the MRPP1-MRPP2 subcomplex of the mitochondrial ribonuclease P complex.

It is found in the mitochondrion. It localises to the mitochondrion matrix. The protein resides in the mitochondrion nucleoid. It carries out the reaction a (3S)-3-hydroxyacyl-CoA + NAD(+) = a 3-oxoacyl-CoA + NADH + H(+). It catalyses the reaction (2S,3S)-3-hydroxy-2-methylbutanoyl-CoA + NAD(+) = 2-methyl-3-oxobutanoyl-CoA + NADH + H(+). The enzyme catalyses testosterone + NAD(+) = androst-4-ene-3,17-dione + NADH + H(+). The catalysed reaction is 5alpha-androstane-3alpha,17beta-diol + NAD(+) = 17beta-hydroxy-5alpha-androstan-3-one + NADH + H(+). It carries out the reaction 17beta-estradiol + NAD(+) = estrone + NADH + H(+). It catalyses the reaction cholate + NAD(+) = 3alpha,12alpha-dihydroxy-7-oxo-5beta-cholanate + NADH + H(+). The enzyme catalyses (3S)-3-hydroxybutanoyl-CoA + NAD(+) = acetoacetyl-CoA + NADH + H(+). The catalysed reaction is (3S)-hydroxyoctanoyl-CoA + NAD(+) = 3-oxooctanoyl-CoA + NADH + H(+). It carries out the reaction (3S)-hydroxyhexadecanoyl-CoA + NAD(+) = 3-oxohexadecanoyl-CoA + NADH + H(+). It catalyses the reaction 17beta-hydroxy-5alpha-androstan-3-one + NAD(+) = 5alpha-androstan-3,17-dione + NADH + H(+). The enzyme catalyses 5alpha-pregnan-20beta-ol-3-one + NAD(+) = 5alpha-pregnane-3,20-dione + NADH + H(+). The catalysed reaction is 3alpha-hydroxy-5alpha-pregnan-20-one + NAD(+) = 5alpha-pregnane-3,20-dione + NADH + H(+). It carries out the reaction cortisone + NAD(+) = 17alpha-hydroxypregn-4-en-3,11,20-trione-21-al + NADH + H(+). It catalyses the reaction 11-dehydrocorticosterone + NAD(+) = pregn-4-ene-3,11,20,21-tetraone + NADH + H(+). The enzyme catalyses cortisol + NAD(+) = 11beta,17alpha-dihydroxypregn-4-ene-3,20,21-trione + NADH + H(+). The catalysed reaction is chenodeoxycholate + NAD(+) = 7-oxolithocholate + NADH + H(+). It carries out the reaction ursodeoxycholate + NAD(+) = 7-oxolithocholate + NADH + H(+). It catalyses the reaction 3beta,7beta-dihydroxy-5beta-cholan-24-oate + NAD(+) = 3beta-hydroxy-7-oxo-5beta-cholan-24-oate + NADH + H(+). It functions in the pathway amino-acid degradation; L-isoleucine degradation. It participates in lipid metabolism; fatty acid beta-oxidation. Its pathway is steroid metabolism. The protein operates within lipid metabolism; bile acid biosynthesis. In terms of biological role, mitochondrial dehydrogenase involved in pathways of fatty acid, branched-chain amino acid and steroid metabolism. Acts as (S)-3-hydroxyacyl-CoA dehydrogenase in mitochondrial fatty acid beta-oxidation, a major degradation pathway of fatty acids. Catalyzes the third step in the beta-oxidation cycle, namely the reversible conversion of (S)-3-hydroxyacyl-CoA to 3-ketoacyl-CoA. Preferentially accepts straight medium- and short-chain acyl-CoA substrates with highest efficiency for (3S)-hydroxybutanoyl-CoA. Acts as 3-hydroxy-2-methylbutyryl-CoA dehydrogenase in branched-chain amino acid catabolic pathway. Catalyzes the oxidation of 3-hydroxy-2-methylbutanoyl-CoA into 2-methyl-3-oxobutanoyl-CoA, a step in isoleucine degradation pathway. Has hydroxysteroid dehydrogenase activity toward steroid hormones and bile acids. Catalyzes the oxidation of 3alpha-, 17beta-, 20beta- and 21-hydroxysteroids and 7alpha- and 7beta-hydroxy bile acids. Oxidizes allopregnanolone/brexanolone at the 3alpha-hydroxyl group, which is known to be critical for the activation of gamma-aminobutyric acid receptors (GABAARs) chloride channel. Has phospholipase C-like activity toward cardiolipin and its oxidized species. Likely oxidizes the 2'-hydroxyl in the head group of cardiolipin to form a ketone intermediate that undergoes nucleophilic attack by water and fragments into diacylglycerol, dihydroxyacetone and orthophosphate. Has higher affinity for cardiolipin with oxidized fatty acids and may degrade these species during the oxidative stress response to protect cells from apoptosis. By interacting with intracellular amyloid-beta, it may contribute to the neuronal dysfunction associated with Alzheimer disease (AD). Essential for structural and functional integrity of mitochondria. In addition to mitochondrial dehydrogenase activity, moonlights as a component of mitochondrial ribonuclease P, a complex that cleaves tRNA molecules in their 5'-ends. Together with TRMT10C/MRPP1, forms a subcomplex of the mitochondrial ribonuclease P, named MRPP1-MRPP2 subcomplex, which displays functions that are independent of the ribonuclease P activity. The MRPP1-MRPP2 subcomplex catalyzes the formation of N(1)-methylguanine and N(1)-methyladenine at position 9 (m1G9 and m1A9, respectively) in tRNAs; HSD17B10/MRPP2 acting as a non-catalytic subunit. The MRPP1-MRPP2 subcomplex also acts as a tRNA maturation platform: following 5'-end cleavage by the mitochondrial ribonuclease P complex, the MRPP1-MRPP2 subcomplex enhances the efficiency of 3'-processing catalyzed by ELAC2, retains the tRNA product after ELAC2 processing and presents the nascent tRNA to the mitochondrial CCA tRNA nucleotidyltransferase TRNT1 enzyme. Associates with mitochondrial DNA complexes at the nucleoids to initiate RNA processing and ribosome assembly. This Mus musculus (Mouse) protein is 3-hydroxyacyl-CoA dehydrogenase type-2 (Hsd17b10).